Reading from the N-terminus, the 443-residue chain is Xaa-Pro dipeptidase (443 aa).

Residues Asp246, Asp257, His339, Glu384, and Glu423 each coordinate Mn(2+).

The protein belongs to the peptidase M24B family. Bacterial-type prolidase subfamily. Mn(2+) serves as cofactor.

The enzyme catalyses Xaa-L-Pro dipeptide + H2O = an L-alpha-amino acid + L-proline. Its function is as follows. Splits dipeptides with a prolyl residue in the C-terminal position. The polypeptide is Xaa-Pro dipeptidase (Pectobacterium carotovorum subsp. carotovorum (strain PC1)).